We begin with the raw amino-acid sequence, 377 residues long: MRRLNRKKTLSLVKELDAFPKVPESYVETSASGGTVSLIAFTTMALLTIMEFSVYQDTWMKYEYEVDKDFSSKLRINIDITVAMKCQYVGADVLDLAETMVASADGLVYEPTVFDLSPQQKEWQRMLQLIQSRLQEEHSLQDVIFKSAFKSTSTALPPREDDSSQSPNACRIHGHLYVNKVAGNFHITVGKAIPHPRGHAHLAALVNHESYNFSHRIDHLSFGELVPAIINPLDGTEKIAIDHNQMFQYFITVVPTKLHTYKISADTHQFSVTERERIINHAAGSHGVSGIFMKYDLSSLMVTVTEEHMPFWQFFVRLCGIVGGIFSTTGMLHGIGKFIVEIICCRFRLGSYKPVNSVPFEDGHTDNHLPLLENNTH.

At 1 to 33 the chain is on the cytoplasmic side; that stretch reads MRRLNRKKTLSLVKELDAFPKVPESYVETSASG. A helical transmembrane segment spans residues 34–54; it reads GTVSLIAFTTMALLTIMEFSV. At 55 to 319 the chain is on the lumenal side; that stretch reads YQDTWMKYEY…PFWQFFVRLC (265 aa). The chain crosses the membrane as a helical span at residues 320–340; it reads GIVGGIFSTTGMLHGIGKFIV. Over 341–377 the chain is Cytoplasmic; that stretch reads EIICCRFRLGSYKPVNSVPFEDGHTDNHLPLLENNTH.

It belongs to the ERGIC family. May form a heteromeric complex composed of ERGIC1, ERGIC2 and ERGIC3. Interacts with ERGIC3, the interaction is required for the stable expression of both proteins. May interact with EEF1A1. Ubiquitously expressed.

It is found in the endoplasmic reticulum-Golgi intermediate compartment membrane. It localises to the golgi apparatus. The protein localises to the cis-Golgi network membrane. Its subcellular location is the endoplasmic reticulum membrane. The protein resides in the cytoplasm. It is found in the nucleus. Functionally, possible role in transport between endoplasmic reticulum and Golgi. In Homo sapiens (Human), this protein is Endoplasmic reticulum-Golgi intermediate compartment protein 2 (ERGIC2).